Reading from the N-terminus, the 508-residue chain is UTP--glucose-1-phosphate uridylyltransferase (508 aa).

Ser13 carries the phosphoserine modification. Residues 113–116 (LNGG), Lys127, Gln190, and Gly222 each bind UTP. A substrate-binding site is contributed by 115-116 (GG). Lys127 contributes to the Mg(2+) binding site. Residues His223 and 251–253 (NID) contribute to the substrate site. The UTP site is built by Asp253 and Lys396. Residue Asp253 coordinates Mg(2+). The active site involves Lys396. Thr426 bears the Phosphothreonine mark. Ser434 is subject to Phosphoserine. N6-acetyllysine is present on Lys438. Residues Ser448 and Ser461 each carry the phosphoserine modification. Positions 457–508 (HLTVSGDVTFGKNVSLKGTVIIIANHGDRIDIPPGAVLENKIVSGNLRILDH) are oligomerization. Residues 502 to 503 (NL) form a critical for end-to-end subunit interaction region.

The protein belongs to the UDPGP type 1 family. In terms of assembly, homooctamer.

The protein localises to the cytoplasm. The catalysed reaction is alpha-D-glucose 1-phosphate + UTP + H(+) = UDP-alpha-D-glucose + diphosphate. It participates in glycan biosynthesis; glycogen biosynthesis. UTP--glucose-1-phosphate uridylyltransferase catalyzing the conversion of glucose-1-phosphate into UDP-glucose, a crucial precursor for the production of glycogen. The polypeptide is UTP--glucose-1-phosphate uridylyltransferase (Ugp2) (Mus musculus (Mouse)).